Here is a 101-residue protein sequence, read N- to C-terminus: Small ribosomal subunit protein uS14 (101 aa).

The segment at 1–21 is disordered; the sequence is MAKVSLIKKNESRKKKSQSLH. Over residues 11–21 the composition is skewed to basic residues; sequence ESRKKKSQSLH.

This sequence belongs to the universal ribosomal protein uS14 family. In terms of assembly, part of the 30S ribosomal subunit. Contacts proteins S3 and S10.

Functionally, binds 16S rRNA, required for the assembly of 30S particles and may also be responsible for determining the conformation of the 16S rRNA at the A site. In Rickettsia canadensis (strain McKiel), this protein is Small ribosomal subunit protein uS14.